The primary structure comprises 798 residues: MEPEINCSEFCDSFPGQELDRRPLHDLCKTTITESQHSSTAASPLSPALLGIMWTFLSCGLLLVLFFLAFTIRCRKNRIVKMSSPNLNVVTLLGSCLTYISAYLFGIQDALEGSSVEALIQTRLSLLCIGTSLVFGPILGKSWRLYKVFTQRVPDKRVIIKDLQLLGLVAALVVADVILLVTWVLTDPIQCLQMLGVSMKVTGRDVSCSLTNTHFCASRYSDVWIALVLGCKGLLLLYGAYLAGLTNHVSSPPVNQSLTIMVGVNLLLLTAGLLFVVTRYLHSWPNLVFGLTSGGIFVCTTTVNCCVFIPQLKQWKAFEGENQTMRHMAKYFSTPSKSFHSQFDEDPSCHLRDEKSCMERLLTEKNAVIESLQEQVSNAKEKLVKLMSAECTYDSPEWAVPDAASARGLALPGPSECPAVSENESGAAARDSLHVPAACQHVQGPGASRRDTSPSPAQQDNMPLKQYCDHLDTGCNQKPKAEQSEGPERGDQEPMAPSQRLMADGVACEPHKPRQSPEGLPKKLPGVSSVVREKLQEVLQELDLGSEAPLSPLPCPQQLWKSTTSRSPQKLSPSKLGFSPYVVRRRRAAQRARSHIPGSVGLNVGHQANSTVSSSQSGLIVQNRDSPRLDHHNARSKVPRSSSVKPSPLSEPRRKQGTLEGSKQCETEPQEAGGACNVAFPCQSSASVQAQSPAAPCLPSSPALPRQRQPRPRLSPGCPSLSSGCYNLDSESSSSDEFFCRCHRPYCEICFQSSLDSNDSDTSDSDLEQASGLASWEKLWARSKPVVNFKDDLKPTLV.

The Extracellular portion of the chain corresponds to 1 to 49 (MEPEINCSEFCDSFPGQELDRRPLHDLCKTTITESQHSSTAASPLSPAL). Residue Asn-6 is glycosylated (N-linked (GlcNAc...) asparagine). A helical membrane pass occupies residues 50–70 (LGIMWTFLSCGLLLVLFFLAF). The Cytoplasmic portion of the chain corresponds to 71-86 (TIRCRKNRIVKMSSPN). A helical transmembrane segment spans residues 87–107 (LNVVTLLGSCLTYISAYLFGI). Over 108–118 (QDALEGSSVEA) the chain is Extracellular. The helical transmembrane segment at 119 to 139 (LIQTRLSLLCIGTSLVFGPIL) threads the bilayer. Topologically, residues 140 to 164 (GKSWRLYKVFTQRVPDKRVIIKDLQ) are cytoplasmic. Residues 165–185 (LLGLVAALVVADVILLVTWVL) form a helical membrane-spanning segment. Residues 186–222 (TDPIQCLQMLGVSMKVTGRDVSCSLTNTHFCASRYSD) are Extracellular-facing. The chain crosses the membrane as a helical span at residues 223 to 243 (VWIALVLGCKGLLLLYGAYLA). Topologically, residues 244–257 (GLTNHVSSPPVNQS) are cytoplasmic. Residues 258-278 (LTIMVGVNLLLLTAGLLFVVT) form a helical membrane-spanning segment. At 279 to 288 (RYLHSWPNLV) the chain is on the extracellular side. The helical transmembrane segment at 289-309 (FGLTSGGIFVCTTTVNCCVFI) threads the bilayer. Residues 310–798 (PQLKQWKAFE…FKDDLKPTLV (489 aa)) lie on the Cytoplasmic side of the membrane. Positions 353 to 390 (DEKSCMERLLTEKNAVIESLQEQVSNAKEKLVKLMSAE) form a coiled coil. 3 disordered regions span residues 441 to 497 (HVQG…PMAP), 546 to 666 (SEAP…KQCE), and 693 to 715 (PAAP…PRLS). Over residues 479–492 (PKAEQSEGPERGDQ) the composition is skewed to basic and acidic residues. The span at 559–572 (LWKSTTSRSPQKLS) shows a compositional bias: polar residues. Positions 583 to 594 (VRRRRAAQRARS) are enriched in basic residues. A compositionally biased stretch (polar residues) spans 606–624 (HQANSTVSSSQSGLIVQNR). The segment covering 639-648 (PRSSSVKPSP) has biased composition (low complexity).

It belongs to the G-protein coupled receptor 3 family. GABA-B receptor subfamily. In terms of tissue distribution, expressed in the outer and inner hair cells of the organ of Corti (at protein level). Expressed in the utricle and saccule within the vestibule (at protein level).

It localises to the cell membrane. The protein resides in the postsynaptic cell membrane. Orphan G-protein coupled receptor involved in the regulation of hair cell orientation in mechanosensory organs of the inner ear. It is required to trigger a 180 degree reversal in hair cell orientation, creating a virtual line of polarity reversal (LPR) across which stereociliary bundles are arranged in opposite orientations. This Mus musculus (Mouse) protein is Probable G-protein coupled receptor 156 (Gpr156).